The primary structure comprises 140 residues: Type II secretion system core protein G (140 aa).

The propeptide at 1–6 (MQRQRG) is leader sequence. Position 7 is an N-methylphenylalanine (Phe-7). The helical transmembrane segment at 7-27 (FTLLEIMVVIVILGVLASLVV) threads the bilayer. A disordered region spans residues 120 to 140 (LGPDGVPESNDDIGNWTIGKK).

The protein belongs to the GSP G family. As to quaternary structure, type II secretion system is composed of four main components: the outer membrane complex, the inner membrane complex, the cytoplasmic secretion ATPase and the periplasm-spanning pseudopilus. Forms homomultimers. In terms of processing, cleaved by the prepilin peptidase. Methylated by prepilin peptidase at the amino group of the N-terminal phenylalanine once the leader sequence is cleaved.

The protein localises to the cell inner membrane. Core component of the type II secretion system required for the energy-dependent secretion of extracellular factors such as proteases and toxins from the periplasm. Pseudopilin (pilin-like) protein that polymerizes to form the pseudopilus. Further polymerization triggers pseudopilus growth. The chain is Type II secretion system core protein G (pulG) from Klebsiella pneumoniae.